Consider the following 477-residue polypeptide: Tyrosine--tRNA ligase, mitochondrial (477 aa).

Residues 1-16 constitute a mitochondrion transit peptide; the sequence is MAAPILRSFSWGRWSG. Tyr-77 provides a ligand contact to L-tyrosine. Asp-81 is an ATP binding site. Positions 82 to 91 match the 'HIGH' region motif; sequence PTADSLHVGH. L-tyrosine-binding residues include Asp-121, Tyr-221, Gln-225, and Asp-228. 244-246 contacts ATP; the sequence is GSD. Gln-247 is an L-tyrosine binding site. ATP-binding residues include Ile-274 and Lys-284. The short motif at 281-285 is the 'KMSKS' region element; it reads KLGKS. N6-acetyllysine occurs at positions 355 and 367.

This sequence belongs to the class-I aminoacyl-tRNA synthetase family. In terms of assembly, homodimer.

The protein localises to the mitochondrion matrix. It carries out the reaction tRNA(Tyr) + L-tyrosine + ATP = L-tyrosyl-tRNA(Tyr) + AMP + diphosphate + H(+). Functionally, catalyzes the attachment of tyrosine to tRNA(Tyr) in a two-step reaction: tyrosine is first activated by ATP to form Tyr-AMP and then transferred to the acceptor end of tRNA(Tyr). This is Tyrosine--tRNA ligase, mitochondrial (YARS2) from Homo sapiens (Human).